The following is a 73-amino-acid chain: MNLETPSQENLDFMLAEITTKLKMVNVGVFENLELDSVDYNALTDIYQLIKRKSNFSPREMQLFAEELRRIRK.

Belongs to the UPF0435 family.

The sequence is that of UPF0435 protein lin1819 from Listeria innocua serovar 6a (strain ATCC BAA-680 / CLIP 11262).